The primary structure comprises 110 residues: Insulin (110 aa).

A signal peptide spans 1–24 (MAPWTRLLPLLALLSLWIPAPTRA). 3 disulfides stabilise this stretch: cysteine 31–cysteine 96, cysteine 43–cysteine 109, and cysteine 95–cysteine 100. Residues 57 to 87 (EAEDLQGKDAELGEAPGAGGLQPSALEAPLQ) constitute a propeptide, c peptide. The interval 60–80 (DLQGKDAELGEAPGAGGLQPS) is disordered.

The protein belongs to the insulin family. Heterodimer of a B chain and an A chain linked by two disulfide bonds.

The protein resides in the secreted. In terms of biological role, insulin decreases blood glucose concentration. It increases cell permeability to monosaccharides, amino acids and fatty acids. It accelerates glycolysis, the pentose phosphate cycle, and glycogen synthesis in liver. This is Insulin (INS) from Felis catus (Cat).